A 282-amino-acid chain; its full sequence is Aquaporin-6 (282 aa).

At 1–25 (MDAVEPGGRGWASMLACRLWKAISR) the chain is on the cytoplasmic side. Residues 26 to 46 (ALFAEFLATGLYVFFGVGSVM) form a helical membrane-spanning segment. The Extracellular portion of the chain corresponds to 47–54 (RWPTALPS). The helical transmembrane segment at 55–73 (VLQIAITFNLVTAMAVQVT) threads the bilayer. The Cytoplasmic portion of the chain corresponds to 74–78 (WKASG). The segment at residues 79–88 (AHANPAVTLA) is an intramembrane region (discontinuously helical). Residues 82-84 (NPA) carry the NPA 1 motif. At 89-99 (FLVGSHISLPR) the chain is on the cytoplasmic side. Residues 100-121 (AVAYVAAQLVGATVGAALLYGV) traverse the membrane as a helical segment. Topologically, residues 122 to 141 (MPGDIRETLGINVVRNSVST) are extracellular. The chain crosses the membrane as a helical span at residues 142-162 (GQAVAVELLLTLQLVLCVFAS). The Cytoplasmic portion of the chain corresponds to 163-168 (TDSRQT). A helical transmembrane segment spans residues 169–188 (SGSPATMIGISVALGHLIGI). The Extracellular portion of the chain corresponds to 189-192 (HFTG). The discontinuously helical intramembrane region spans 193–205 (CSMNPARSFGPAI). Positions 196-198 (NPA) match the NPA 2 motif. Residues 206-213 (IIGKFTVH) lie on the Extracellular side of the membrane. Residues 214-234 (WVFWVGPLMGALLASLIYNFV) traverse the membrane as a helical segment. Over 235 to 282 (LFPDTKTLAQRLAILTGTVEVGTGAGAGAEPLKKESQPGSGAVEMESV) the chain is Cytoplasmic. The segment at 260–282 (GAGAEPLKKESQPGSGAVEMESV) is disordered.

The protein belongs to the MIP/aquaporin (TC 1.A.8) family. As to quaternary structure, homotetramer; each monomer provides an independent solute pore.

It localises to the cytoplasmic vesicle membrane. It carries out the reaction nitrate(in) = nitrate(out). The enzyme catalyses iodide(out) = iodide(in). It catalyses the reaction bromide(in) = bromide(out). The catalysed reaction is chloride(in) = chloride(out). It carries out the reaction Na(+)(in) = Na(+)(out). The enzyme catalyses H2O(in) = H2O(out). It catalyses the reaction CO2(out) = CO2(in). The catalysed reaction is NH4(+)(in) = NH4(+)(out). Aquaporins form homotetrameric transmembrane channels, with each monomer independently mediating water transport across the plasma membrane along its osmotic gradient. Unlike classical aquaporins, AQP6 is an intracellular channel with selective anion permeability, particularly for nitrate, and exhibits very low water permeability. It may also facilitate the transport of gases, such as CO2 and NH4(+), as demonstrated in vitro. The polypeptide is Aquaporin-6 (Homo sapiens (Human)).